We begin with the raw amino-acid sequence, 444 residues long: 3-phosphoshikimate 1-carboxyvinyltransferase (444 aa).

3-phosphoshikimate-binding residues include lysine 29, serine 30, and arginine 34. A phosphoenolpyruvate-binding site is contributed by lysine 29. Residues glycine 103 and arginine 132 each contribute to the phosphoenolpyruvate site. Serine 177, glutamine 179, aspartate 329, and lysine 356 together coordinate 3-phosphoshikimate. A phosphoenolpyruvate-binding site is contributed by glutamine 179. Aspartate 329 functions as the Proton acceptor in the catalytic mechanism. The phosphoenolpyruvate site is built by arginine 360 and arginine 402.

It belongs to the EPSP synthase family. In terms of assembly, monomer.

The protein localises to the cytoplasm. It carries out the reaction 3-phosphoshikimate + phosphoenolpyruvate = 5-O-(1-carboxyvinyl)-3-phosphoshikimate + phosphate. The protein operates within metabolic intermediate biosynthesis; chorismate biosynthesis; chorismate from D-erythrose 4-phosphate and phosphoenolpyruvate: step 6/7. Catalyzes the transfer of the enolpyruvyl moiety of phosphoenolpyruvate (PEP) to the 5-hydroxyl of shikimate-3-phosphate (S3P) to produce enolpyruvyl shikimate-3-phosphate and inorganic phosphate. The polypeptide is 3-phosphoshikimate 1-carboxyvinyltransferase (Prochlorococcus marinus (strain NATL2A)).